The following is a 570-amino-acid chain: Phosphoglucomutase 1 (570 aa).

Serine 2 bears the N-acetylserine mark. Alpha-D-glucose 1,6-bisphosphate-binding residues include arginine 24 and serine 120. The active-site Phosphoserine intermediate is serine 120. 4 residues coordinate Mg(2+): serine 120, aspartate 291, aspartate 293, and aspartate 295. Position 120 is a phosphoserine (serine 120). Alpha-D-glucose 1,6-bisphosphate is bound by residues aspartate 295, arginine 296, threonine 360, glutamate 379, serine 381, and lysine 392.

Belongs to the phosphohexose mutase family. In terms of assembly, monomer. It depends on Mg(2+) as a cofactor.

The protein resides in the cytoplasm. It carries out the reaction alpha-D-glucose 1-phosphate = alpha-D-glucose 6-phosphate. The enzyme catalyses O-phospho-L-seryl-[protein] + alpha-D-glucose 1-phosphate = alpha-D-glucose 1,6-bisphosphate + L-seryl-[protein]. It catalyses the reaction alpha-D-glucose 1,6-bisphosphate + L-seryl-[protein] = O-phospho-L-seryl-[protein] + alpha-D-glucose 6-phosphate. Functionally, minor phosphoglucomutase isozyme that catalyzes the reversible interconversion of alpha-D-glucose 1-phosphate and alpha-D-glucose 6-phosphate. The mechanism proceeds via the intermediate compound alpha-D-glucose 1,6-bisphosphate. Constitutes about 10-20% of the phosphoglucomutase activity in the cell. Key enzyme in hexose metabolism. The forward reaction is an essential step in the energy metabolism of galactose since the product of the galactose pathway enzymes in yeast is glucose 1-phosphate. The reverse reaction is an essential step for biosynthesis when carbon sources other than galactose are the energy source because glucose 1-phosphate is the starting point for the synthesis of UDP-glucose, which acts as a precursor for the synthesis of oligosaccharides and trehalose. The chain is Phosphoglucomutase 1 from Saccharomyces cerevisiae (strain ATCC 204508 / S288c) (Baker's yeast).